The following is a 158-amino-acid chain: 6,7-dimethyl-8-ribityllumazine synthase (158 aa).

5-amino-6-(D-ribitylamino)uracil contacts are provided by residues phenylalanine 22, 57 to 59, and 81 to 83; these read AVE and AVI. 86-87 is a binding site for (2S)-2-hydroxy-3-oxobutyl phosphate; it reads GT. The Proton donor role is filled by histidine 89. Phenylalanine 114 contributes to the 5-amino-6-(D-ribitylamino)uracil binding site. A (2S)-2-hydroxy-3-oxobutyl phosphate-binding site is contributed by arginine 128.

Belongs to the DMRL synthase family. Forms an icosahedral capsid composed of 60 subunits, arranged as a dodecamer of pentamers.

The catalysed reaction is (2S)-2-hydroxy-3-oxobutyl phosphate + 5-amino-6-(D-ribitylamino)uracil = 6,7-dimethyl-8-(1-D-ribityl)lumazine + phosphate + 2 H2O + H(+). Its pathway is cofactor biosynthesis; riboflavin biosynthesis; riboflavin from 2-hydroxy-3-oxobutyl phosphate and 5-amino-6-(D-ribitylamino)uracil: step 1/2. Its function is as follows. Catalyzes the formation of 6,7-dimethyl-8-ribityllumazine by condensation of 5-amino-6-(D-ribitylamino)uracil with 3,4-dihydroxy-2-butanone 4-phosphate. This is the penultimate step in the biosynthesis of riboflavin. This chain is 6,7-dimethyl-8-ribityllumazine synthase, found in Shewanella oneidensis (strain ATCC 700550 / JCM 31522 / CIP 106686 / LMG 19005 / NCIMB 14063 / MR-1).